A 135-amino-acid polypeptide reads, in one-letter code: MKFIGLATLSLFALASADKFPVPDSITVAEGSSKCGDQAQLSCCNDVKYGGDTTVVQKGIAAGLLSDLLGAGSAAEGLGAFSGCSKLDISLLIGIEDILNQKCKQNIACCAKSGGSADGDLVGATLPCIALGSIL.

The N-terminal stretch at 1–17 (MKFIGLATLSLFALASA) is a signal peptide. Disulfide bonds link cysteine 35-cysteine 109, cysteine 43-cysteine 103, cysteine 44-cysteine 84, and cysteine 110-cysteine 128.

This sequence belongs to the fungal hydrophobin family. As to quaternary structure, self-assembles to form functional amyloid fibrils called rodlets. Self-assembly into fibrillar rodlets occurs spontaneously at hydrophobic:hydrophilic interfaces and the rodlets further associate laterally to form amphipathic monolayers.

The protein localises to the secreted. Its subcellular location is the spore wall. Aerial growth, conidiation, and dispersal of filamentous fungi in the environment rely upon a capability of their secreting small amphipathic proteins called hydrophobins (HPBs) with low sequence identity. Class I can self-assemble into an outermost layer of rodlet bundles on aerial cell surfaces, conferring cellular hydrophobicity that supports fungal growth, development and dispersal; whereas Class II form highly ordered films at water-air interfaces through intermolecular interactions but contribute nothing to the rodlet structure. DewB is a class I hydrophobin that contributes to the hydrophobicity of the spore surface. The polypeptide is Class I hydrophobin dewB (Emericella nidulans (strain FGSC A4 / ATCC 38163 / CBS 112.46 / NRRL 194 / M139) (Aspergillus nidulans)).